Reading from the N-terminus, the 366-residue chain is S-adenosylmethionine:tRNA ribosyltransferase-isomerase (366 aa).

It belongs to the QueA family. In terms of assembly, monomer.

It localises to the cytoplasm. The catalysed reaction is 7-aminomethyl-7-carbaguanosine(34) in tRNA + S-adenosyl-L-methionine = epoxyqueuosine(34) in tRNA + adenine + L-methionine + 2 H(+). It functions in the pathway tRNA modification; tRNA-queuosine biosynthesis. Its function is as follows. Transfers and isomerizes the ribose moiety from AdoMet to the 7-aminomethyl group of 7-deazaguanine (preQ1-tRNA) to give epoxyqueuosine (oQ-tRNA). In Methylorubrum populi (strain ATCC BAA-705 / NCIMB 13946 / BJ001) (Methylobacterium populi), this protein is S-adenosylmethionine:tRNA ribosyltransferase-isomerase.